Here is a 344-residue protein sequence, read N- to C-terminus: Holliday junction branch migration complex subunit RuvB (344 aa).

The span at methionine 1 to leucine 25 shows a compositional bias: basic and acidic residues. Residues methionine 1–phenylalanine 33 form a disordered region. The large ATPase domain (RuvB-L) stretch occupies residues methionine 1–tyrosine 186. ATP is bound by residues leucine 25, arginine 26, glycine 67, lysine 70, threonine 71, threonine 72, glutamate 133 to phenylalanine 135, arginine 176, tyrosine 186, and arginine 223. Residue threonine 71 participates in Mg(2+) binding. Residues threonine 187–glycine 257 form a small ATPAse domain (RuvB-S) region. The segment at aspartate 260–isoleucine 344 is head domain (RuvB-H). Residues arginine 296, arginine 315, and arginine 320 each coordinate DNA.

The protein belongs to the RuvB family. In terms of assembly, homohexamer. Forms an RuvA(8)-RuvB(12)-Holliday junction (HJ) complex. HJ DNA is sandwiched between 2 RuvA tetramers; dsDNA enters through RuvA and exits via RuvB. An RuvB hexamer assembles on each DNA strand where it exits the tetramer. Each RuvB hexamer is contacted by two RuvA subunits (via domain III) on 2 adjacent RuvB subunits; this complex drives branch migration. In the full resolvosome a probable DNA-RuvA(4)-RuvB(12)-RuvC(2) complex forms which resolves the HJ.

It is found in the cytoplasm. The enzyme catalyses ATP + H2O = ADP + phosphate + H(+). In terms of biological role, the RuvA-RuvB-RuvC complex processes Holliday junction (HJ) DNA during genetic recombination and DNA repair, while the RuvA-RuvB complex plays an important role in the rescue of blocked DNA replication forks via replication fork reversal (RFR). RuvA specifically binds to HJ cruciform DNA, conferring on it an open structure. The RuvB hexamer acts as an ATP-dependent pump, pulling dsDNA into and through the RuvAB complex. RuvB forms 2 homohexamers on either side of HJ DNA bound by 1 or 2 RuvA tetramers; 4 subunits per hexamer contact DNA at a time. Coordinated motions by a converter formed by DNA-disengaged RuvB subunits stimulates ATP hydrolysis and nucleotide exchange. Immobilization of the converter enables RuvB to convert the ATP-contained energy into a lever motion, pulling 2 nucleotides of DNA out of the RuvA tetramer per ATP hydrolyzed, thus driving DNA branch migration. The RuvB motors rotate together with the DNA substrate, which together with the progressing nucleotide cycle form the mechanistic basis for DNA recombination by continuous HJ branch migration. Branch migration allows RuvC to scan DNA until it finds its consensus sequence, where it cleaves and resolves cruciform DNA. In Jannaschia sp. (strain CCS1), this protein is Holliday junction branch migration complex subunit RuvB.